The chain runs to 178 residues: Ribosome maturation factor RimM (178 aa).

In terms of domain architecture, PRC barrel spans 101-178 (TDEYYWYQLV…VMRVEWDADF (78 aa)).

The protein belongs to the RimM family. In terms of assembly, binds ribosomal protein uS19.

It localises to the cytoplasm. Functionally, an accessory protein needed during the final step in the assembly of 30S ribosomal subunit, possibly for assembly of the head region. Essential for efficient processing of 16S rRNA. May be needed both before and after RbfA during the maturation of 16S rRNA. It has affinity for free ribosomal 30S subunits but not for 70S ribosomes. This chain is Ribosome maturation factor RimM, found in Pseudomonas entomophila (strain L48).